The following is a 750-amino-acid chain: Photosystem I P700 chlorophyll a apoprotein A1 (750 aa).

The next 8 helical transmembrane spans lie at 70-93 (VFSA…FHGA), 156-179 (LYTT…FHYH), 195-219 (LNHH…HVSL), 291-309 (TAHH…GHMY), 346-369 (WHAQ…HHMY), 385-411 (LSLF…IFMV), 433-455 (AIIS…LYIH), and 531-549 (FLVH…LILL). [4Fe-4S] cluster-binding residues include Cys573 and Cys582. 2 helical membrane passes run 589–610 (HVFL…HFSW) and 664–686 (LSAY…MFLF). His675 lines the chlorophyll a' pocket. Chlorophyll a is bound by residues Met683 and Tyr691. A phylloquinone-binding site is contributed by Trp692. The helical transmembrane segment at 724–744 (AVGVAHYLLGGIATTWAFFLA) threads the bilayer.

The protein belongs to the PsaA/PsaB family. The PsaA/B heterodimer binds the P700 chlorophyll special pair and subsequent electron acceptors. PSI consists of a core antenna complex that captures photons, and an electron transfer chain that converts photonic excitation into a charge separation. The eukaryotic PSI reaction center is composed of at least 11 subunits. It depends on P700 is a chlorophyll a/chlorophyll a' dimer, A0 is one or more chlorophyll a, A1 is one or both phylloquinones and FX is a shared 4Fe-4S iron-sulfur center. as a cofactor.

The protein localises to the plastid. It is found in the chloroplast thylakoid membrane. The enzyme catalyses reduced [plastocyanin] + hnu + oxidized [2Fe-2S]-[ferredoxin] = oxidized [plastocyanin] + reduced [2Fe-2S]-[ferredoxin]. In terms of biological role, psaA and PsaB bind P700, the primary electron donor of photosystem I (PSI), as well as the electron acceptors A0, A1 and FX. PSI is a plastocyanin-ferredoxin oxidoreductase, converting photonic excitation into a charge separation, which transfers an electron from the donor P700 chlorophyll pair to the spectroscopically characterized acceptors A0, A1, FX, FA and FB in turn. Oxidized P700 is reduced on the lumenal side of the thylakoid membrane by plastocyanin. This is Photosystem I P700 chlorophyll a apoprotein A1 from Physcomitrium patens (Spreading-leaved earth moss).